The chain runs to 335 residues: Glyceraldehyde-3-phosphate dehydrogenase (335 aa).

NAD(+) is bound by residues 10 to 11 (RI), Asp-33, Lys-77, and Thr-119. D-glyceraldehyde 3-phosphate-binding positions include 150-152 (SCT), Thr-181, 210-211 (TG), and Arg-233. Residue Cys-151 is the Nucleophile of the active site. Asn-315 contributes to the NAD(+) binding site.

Belongs to the glyceraldehyde-3-phosphate dehydrogenase family. Homotetramer.

The protein localises to the cytoplasm. It carries out the reaction D-glyceraldehyde 3-phosphate + phosphate + NAD(+) = (2R)-3-phospho-glyceroyl phosphate + NADH + H(+). The protein operates within carbohydrate degradation; glycolysis; pyruvate from D-glyceraldehyde 3-phosphate: step 1/5. Functionally, catalyzes the oxidative phosphorylation of glyceraldehyde 3-phosphate (G3P) to 1,3-bisphosphoglycerate (BPG) using the cofactor NAD. The first reaction step involves the formation of a hemiacetal intermediate between G3P and a cysteine residue, and this hemiacetal intermediate is then oxidized to a thioester, with concomitant reduction of NAD to NADH. The reduced NADH is then exchanged with the second NAD, and the thioester is attacked by a nucleophilic inorganic phosphate to produce BPG. The polypeptide is Glyceraldehyde-3-phosphate dehydrogenase (gap) (Chlamydia muridarum (strain MoPn / Nigg)).